We begin with the raw amino-acid sequence, 628 residues long: Propionate--CoA ligase (628 aa).

Belongs to the ATP-dependent AMP-binding enzyme family.

The enzyme catalyses propanoate + ATP + CoA = propanoyl-CoA + AMP + diphosphate. The protein operates within organic acid metabolism; propanoate degradation. In terms of biological role, catalyzes the synthesis of propionyl-CoA from propionate and CoA. Also converts acetate to acetyl-CoA but with a lower specific activity. The chain is Propionate--CoA ligase (prpE) from Salmonella typhimurium (strain LT2 / SGSC1412 / ATCC 700720).